An 89-amino-acid polypeptide reads, in one-letter code: OMEGA-ectatommitoxin(02)-Rm1b (89 aa).

A signal peptide spans methionine 1–glycine 30. Intrachain disulfides connect cysteine 39–cysteine 52, cysteine 47–cysteine 68, and cysteine 70–cysteine 79. Residues tyrosine 43–glycine 80 enclose the EGF-like domain.

Belongs to the EGF domain peptide family. In terms of tissue distribution, expressed by the venom gland.

It is found in the secreted. Functionally, ant peptide with probable defensive activity which acts as a potent agonist of the mammalian epidermal growth factor receptor (EGFR). Mimics, both structurally and functionally, vertebrate epidermal growth factor (EGF) peptide hormones. In vivo, intraplantar injection in mice causes long-lasting (several days) hypersensitivity of the injected paw to both mechanical and thermal stimuli. Its long-lasting effect is unusual for venom toxins whose effects are usually immediate. One possible explanation is that it would reduce the duration of a nest attack, discourage future attacks, or enhance the actions of subsequent exposure to other pain-inducing venom peptides. This chain is OMEGA-ectatommitoxin(02)-Rm1b, found in Rhytidoponera metallica (Australian green-headed ant).